The sequence spans 148 residues: MAVHKEVNFVAYLLIVLGMFLYVDAKACTRECGNLGFGICPRSEGSPLNPICINCCSGYKGCNYYNSFGKFICEGESDPKRPNACTFNCDPNIAYSRCPRSQGKSLIYPTGCTTCCTGYKGCYYFGKDGKFVCEGESDEPKANMYPVM.

The N-terminal stretch at 1 to 25 (MAVHKEVNFVAYLLIVLGMFLYVDA) is a signal peptide. One copy of the 1; trypsin-inhibitory repeat lies at 26–81 (KACTRECGNLGFGICPRSEGSPLNPICINCCSGYKGCNYYNSFGKFICEGESDPKR). 8 cysteine pairs are disulfide-bonded: Cys-28/Cys-116, Cys-32/Cys-112, Cys-40/Cys-122, Cys-52/Cys-89, Cys-55/Cys-73, Cys-56/Cys-85, Cys-62/Cys-98, and Cys-115/Cys-133. A 2; chymotrypsin-inhibitory repeat occupies 83–141 (NACTFNCDPNIAYSRCPRSQGKSLIYPTGCTTCCTGYKGCYYFGKDGKFVCEGESDEPK).

Belongs to the protease inhibitor I20 (potato type II proteinase inhibitor) family.

It localises to the secreted. Potent inhibitor of both trypsin and chymotrypsin. This is Wound-induced proteinase inhibitor 2 from Solanum lycopersicum (Tomato).